We begin with the raw amino-acid sequence, 240 residues long: Dihydromonapterin reductase (240 aa).

Tyr-152 acts as the Proton acceptor in catalysis.

This sequence belongs to the short-chain dehydrogenases/reductases (SDR) family. FolM subfamily.

It carries out the reaction (6S)-5,6,7,8-tetrahydrofolate + NADP(+) = 7,8-dihydrofolate + NADPH + H(+). The enzyme catalyses 7,8-dihydromonapterin + NADPH + H(+) = 5,6,7,8-tetrahydromonapterin + NADP(+). Catalyzes the reduction of dihydromonapterin to tetrahydromonapterin. Also has lower activity with dihydrofolate. The chain is Dihydromonapterin reductase (folM) from Shigella flexneri serotype 5b (strain 8401).